The following is a 227-amino-acid chain: Leucyl/phenylalanyl-tRNA--protein transferase (227 aa).

This sequence belongs to the L/F-transferase family.

The protein localises to the cytoplasm. It carries out the reaction N-terminal L-lysyl-[protein] + L-leucyl-tRNA(Leu) = N-terminal L-leucyl-L-lysyl-[protein] + tRNA(Leu) + H(+). The enzyme catalyses N-terminal L-arginyl-[protein] + L-leucyl-tRNA(Leu) = N-terminal L-leucyl-L-arginyl-[protein] + tRNA(Leu) + H(+). It catalyses the reaction L-phenylalanyl-tRNA(Phe) + an N-terminal L-alpha-aminoacyl-[protein] = an N-terminal L-phenylalanyl-L-alpha-aminoacyl-[protein] + tRNA(Phe). Its function is as follows. Functions in the N-end rule pathway of protein degradation where it conjugates Leu, Phe and, less efficiently, Met from aminoacyl-tRNAs to the N-termini of proteins containing an N-terminal arginine or lysine. This Afipia carboxidovorans (strain ATCC 49405 / DSM 1227 / KCTC 32145 / OM5) (Oligotropha carboxidovorans) protein is Leucyl/phenylalanyl-tRNA--protein transferase.